Reading from the N-terminus, the 401-residue chain is L-rhamnonate dehydratase (401 aa).

Residues His29 and Arg55 each coordinate substrate. Mg(2+)-binding residues include Asp222, Glu248, and Glu276. His325 (proton acceptor) is an active-site residue. Residue Glu345 coordinates substrate.

The protein belongs to the mandelate racemase/muconate lactonizing enzyme family. RhamD subfamily. In terms of assembly, homooctamer; tetramer of dimers. Mg(2+) serves as cofactor.

It carries out the reaction L-rhamnonate = 2-dehydro-3-deoxy-L-rhamnonate + H2O. Catalyzes the dehydration of L-rhamnonate to 2-keto-3-deoxy-L-rhamnonate (KDR). This is L-rhamnonate dehydratase from Salmonella schwarzengrund (strain CVM19633).